A 267-amino-acid polypeptide reads, in one-letter code: 3-methyl-2-oxobutanoate hydroxymethyltransferase (267 aa).

Positions 45 and 84 each coordinate Mg(2+). Residues 45 to 46, Asp84, and Lys113 contribute to the 3-methyl-2-oxobutanoate site; that span reads DS. A Mg(2+)-binding site is contributed by Glu115. Residue Glu182 is the Proton acceptor of the active site.

The protein belongs to the PanB family. As to quaternary structure, homodecamer; pentamer of dimers. Mg(2+) is required as a cofactor.

It is found in the cytoplasm. The catalysed reaction is 3-methyl-2-oxobutanoate + (6R)-5,10-methylene-5,6,7,8-tetrahydrofolate + H2O = 2-dehydropantoate + (6S)-5,6,7,8-tetrahydrofolate. The protein operates within cofactor biosynthesis; coenzyme A biosynthesis. Its function is as follows. Catalyzes the reversible reaction in which hydroxymethyl group from 5,10-methylenetetrahydrofolate is transferred onto alpha-ketoisovalerate to form ketopantoate. The polypeptide is 3-methyl-2-oxobutanoate hydroxymethyltransferase (Saccharolobus islandicus (strain Y.G.57.14 / Yellowstone #1) (Sulfolobus islandicus)).